The chain runs to 267 residues: 5'-nucleotidase SurE (267 aa).

A divalent metal cation contacts are provided by Asp-9, Asp-10, Ser-40, and Asn-97.

The protein belongs to the SurE nucleotidase family. It depends on a divalent metal cation as a cofactor.

Its subcellular location is the cytoplasm. It carries out the reaction a ribonucleoside 5'-phosphate + H2O = a ribonucleoside + phosphate. Functionally, nucleotidase that shows phosphatase activity on nucleoside 5'-monophosphates. This Helicobacter pylori (strain P12) protein is 5'-nucleotidase SurE.